Consider the following 168-residue polypeptide: DAZ-associated protein 2 (168 aa).

Residues 1-13 (MNSKGQYPTQPTY) are compositionally biased toward low complexity. The tract at residues 1 to 25 (MNSKGQYPTQPTYPVQPPGNPVYPQ) is disordered. Positions 39–42 (PPAY) match the PPAY motif. Ser77 carries the post-translational modification Phosphoserine.

In terms of assembly, interacts with SOX6. Interacts with DAZ1 and DAZL. Interacts with IL17RB. May interact with FAM168B. Interacts with INCA1. Interacts with EIF4G1 and EIF4G2. Interacts (via PPAY motif) with NEDD4 (via WW domains). Interacts with transcription factor TCF4; the interaction results in localization of DAZAP2 to the nucleus. Interacts with transcription factors TCF7 and TCF7L1. Interacts with transcription factor LEF1. Interacts with serine/threonine-protein kinase HIPK2; the interaction results in phosphorylation of DAZAP2 which causes localization of DAZAP2 to the nucleus, reduces interaction of DAZAP2 with HIPK2 and prevents DAZAP2-dependent degradation of HIPK2. Interacts with ubiquitin ligase SIAH1; the interaction is decreased following phosphorylation of DAZAP2 by HIPK2. Interacts with TP53; the interaction is triggered by DNA damage. In terms of processing, ubiquitinated by SMURF2, leading to proteasomal degradation. Ubiquitinated by NEDD4, leading to proteasomal degradation. Following DNA damage, phosphorylated by HIPK2 which promotes DAZAP2 localization to the nucleus, reduces interaction of DAZAP2 with HIPK2 and SIAH1, and prevents DAZAP2-dependent ubiquitination of HIPK2 by E3 ubiquitin-protein ligase SIAH1 and subsequent HIPK2 proteasomal degradation.

Its subcellular location is the cytoplasm. It localises to the nucleus. The protein resides in the nucleus speckle. The protein localises to the nuclear body. It is found in the stress granule. Its function is as follows. In unstressed cells, promotes SIAH1-mediated polyubiquitination and degradation of the serine/threonine-protein kinase HIPK2, probably by acting as a loading factor that potentiates complex formation between HIPK2 and ubiquitin ligase SIAH1. In response to DNA damage, localizes to the nucleus following phosphorylation by HIPK2 and modulates the expression of a subset of TP53/p53 target genes by binding to TP53 at target gene promoters. This limits the expression of a number of cell death-mediating TP53 target genes, reducing DNA damage-induced cell death. Enhances the binding of transcription factor TCF7L2/TCF4, a Wnt signaling pathway effector, to the promoters of target genes. Plays a role in stress granule formation. This is DAZ-associated protein 2 from Rattus norvegicus (Rat).